A 122-amino-acid polypeptide reads, in one-letter code: Large ribosomal subunit protein uL14 (122 aa).

It belongs to the universal ribosomal protein uL14 family. As to quaternary structure, part of the 50S ribosomal subunit. Forms a cluster with proteins L3 and L19. In the 70S ribosome, L14 and L19 interact and together make contacts with the 16S rRNA in bridges B5 and B8.

Binds to 23S rRNA. Forms part of two intersubunit bridges in the 70S ribosome. The polypeptide is Large ribosomal subunit protein uL14 (Synechococcus sp. (strain JA-2-3B'a(2-13)) (Cyanobacteria bacterium Yellowstone B-Prime)).